We begin with the raw amino-acid sequence, 594 residues long: F-box/LRR-repeat protein At3g58980 (594 aa).

Residues 1–49 (MDRISNLPNEIICHIVSFLSAKEAAFASILSKRWRNLFTIVIKLQFDDS) form the F-box domain. LRR repeat units lie at residues 103–125 (ILDL…VFTC), 128–151 (LVKL…DAFL), 152–174 (PALE…AFEK), 203–218 (SPTL…DLYE), 219–242 (CEFT…AVPD), 249–272 (LDSL…GYVD), 288–314 (LRNV…AIPV), 315–339 (FKNL…FLPF), 344–369 (CPNL…VCHC), 403–414 (LEKLSGLKLVKL), 415–437 (HSLT…SSKC), 450–474 (LPSL…AFQK), 503–518 (SQTL…YWAE), 519–541 (HNLE…AHVP), and 584–594 (LRNVEILRLWM).

The sequence is that of F-box/LRR-repeat protein At3g58980 from Arabidopsis thaliana (Mouse-ear cress).